The primary structure comprises 213 residues: Protein MobE (213 aa).

This chain is Protein MobE (mobE), found in Acidithiobacillus ferrooxidans (Thiobacillus ferrooxidans).